A 352-amino-acid polypeptide reads, in one-letter code: Spermidine/putrescine import ATP-binding protein PotA (352 aa).

The 231-residue stretch at 7–237 (IRLENVTKSF…PVNAFVADFI (231 aa)) folds into the ABC transporter domain. 39-46 (GPSGCGKT) provides a ligand contact to ATP.

This sequence belongs to the ABC transporter superfamily. Spermidine/putrescine importer (TC 3.A.1.11.1) family. As to quaternary structure, the complex is composed of two ATP-binding proteins (PotA), two transmembrane proteins (PotB and PotC) and a solute-binding protein (PotD).

Its subcellular location is the cell membrane. It catalyses the reaction ATP + H2O + polyamine-[polyamine-binding protein]Side 1 = ADP + phosphate + polyamineSide 2 + [polyamine-binding protein]Side 1.. Part of the ABC transporter complex PotABCD involved in spermidine/putrescine import. Responsible for energy coupling to the transport system. The sequence is that of Spermidine/putrescine import ATP-binding protein PotA from Acetivibrio thermocellus (strain ATCC 27405 / DSM 1237 / JCM 9322 / NBRC 103400 / NCIMB 10682 / NRRL B-4536 / VPI 7372) (Clostridium thermocellum).